The sequence spans 187 residues: Probable carboxylesterase Culp7 (187 aa).

The cysteines at positions 15 and 69 are disulfide-linked. The active-site Nucleophile is the Ser-80. Cysteines 151 and 158 form a disulfide. Asp-155 is an active-site residue. His-167 serves as the catalytic Proton donor/acceptor.

It belongs to the cutinase family.

It is found in the cytoplasm. The protein resides in the cell membrane. Its subcellular location is the secreted. The protein localises to the cell wall. Its function is as follows. May have a role in cell wall processes. Does not exhibit cutinase activity. The polypeptide is Probable carboxylesterase Culp7 (Mycobacterium tuberculosis (strain ATCC 25618 / H37Rv)).